The chain runs to 143 residues: Hemoglobin cathodic subunit alpha (143 aa).

At Ser-1 the chain carries N-acetylserine. A Globin domain is found at 1–143; sequence SLAPGDKTVV…VCAALSDKYR (143 aa). Residue His-59 participates in O2 binding. His-89 is a heme b binding site.

Belongs to the globin family. As to quaternary structure, heterotetramer of two alpha chains and two beta chains. Red blood cells.

In terms of biological role, involved in oxygen transport from gills to the various peripheral tissues. The protein is Hemoglobin cathodic subunit alpha of Gymnothorax unicolor (Brown moray).